The following is a 425-amino-acid chain: MAGDELKGKKRKYRDSHSGDEKSVKILPLSESSLPPLVTTISGFYPPENTRFQLLKKSNQSNRDASLIGRTERVQFEAKNQSTATVEANYCLAVADKTGRVKKIVPAKYLNTFERNILALQEKDKFLKKKHGTVSGTVMEQRANLGLAFGTRKSQKAIMEESANRVKAETLGDVKDQLVSNVQKATEALPTQEDIAAAQAQDRPIPPVNVGAESIEDAYKLEDIIPKEEFSAIYIKPLLENPDERNWAKLLPYRHSLFINERFQRLLSIEEVDQKRARILYYISLLQAFLFSRRSVGNRETLRKKLADPPEILIDGLIKRFTQTTGIGSVQVSSREVDKIICYILVLCLIVDNYSTDVLTLANDLNVKTMKANELFRTVGCRIMAYTETQRMALGLNKTDAKNHKRAVLKIPLEFPKPRRGRARN.

The tract at residues 1-26 (MAGDELKGKKRKYRDSHSGDEKSVKI) is disordered. Residues 15 to 24 (DSHSGDEKSV) are compositionally biased toward basic and acidic residues.

It belongs to the eukaryotic RPA49/POLR1E RNA polymerase subunit family. As to quaternary structure, component of the RNA polymerase I (Pol I) complex consisting of 14 subunits.

The protein localises to the nucleus. The protein resides in the nucleolus. Functionally, DNA-dependent RNA polymerase catalyzes the transcription of DNA into RNA using the four ribonucleoside triphosphates as substrates. Component of RNA polymerase I which synthesizes ribosomal RNA precursors. In Schizosaccharomyces pombe (strain 972 / ATCC 24843) (Fission yeast), this protein is DNA-directed RNA polymerase I subunit rpa49 (rpa49).